A 522-amino-acid chain; its full sequence is DEP domain-containing protein 7 (522 aa).

One can recognise a DEP domain in the interval 46-138; it reads LYTQVEVKKR…SSCSLYRFLN (93 aa).

Belongs to the DEPDC7 family.

This chain is DEP domain-containing protein 7 (depdc7), found in Xenopus laevis (African clawed frog).